A 397-amino-acid chain; its full sequence is Cytochrome b (397 aa).

Helical transmembrane passes span 48–68, 92–113, 128–148, and 193–213; these read FGSM…LLSA, WMLR…YAHI, WYFG…GYTL, and FYTL…LHLF. Residues histidine 98 and histidine 112 each coordinate heme b. Histidine 197 and histidine 211 together coordinate heme b. Histidine 216 serves as a coordination point for a ubiquinone. The next 4 helical transmembrane spans lie at 241–261, 303–323, 335–355, and 362–382; these read IKDL…VCVD, AGGV…PTLH, LNQV…WIGA, and YIIL…WTPF.

This sequence belongs to the cytochrome b family. In terms of assembly, the main subunits of complex b-c1 are: cytochrome b, cytochrome c1 and the Rieske protein. Heme b is required as a cofactor.

It is found in the mitochondrion inner membrane. Component of the ubiquinol-cytochrome c reductase complex (complex III or cytochrome b-c1 complex) that is part of the mitochondrial respiratory chain. The b-c1 complex mediates electron transfer from ubiquinol to cytochrome c. Contributes to the generation of a proton gradient across the mitochondrial membrane that is then used for ATP synthesis. The chain is Cytochrome b (MT-CYB) from Mytilus edulis (Blue mussel).